The following is a 521-amino-acid chain: MQRKEANPFQILGLRPWLVKQLTKLGLKGATPIQQKCIPAILAGQDCIGAAKTGSGKTFAFALPILERLSEEPVSHFALVLTPTHELAYQISEQFLVAGQAMGVRVCVVSGGTDQMVESQKLMQRPHIVVAMPGRLADHLTGCDTFSFDNLKYLVVDEADRMLNGDFDESLSIIERCLPKTRQNLFFSATMKDFIKESSIFPIASDCFEWSQDSDVATVETLDQRYLLCADYDRDMVLIEALRKYREENENANVMIFTNTKKYCQLLSMTLKNMEIDNVCLHGFMRQKERVAALSRFKSNQIRTLIATDVAARGLDIPSVELVMNHMLPRTPKEYIHRVGRTARAGRKGMSISIFRFPRDLELLAAIEEEINTKLTEHPIDQRMVERIFMQVNVTRRESEMQLDNNDFDERAQNYRRKTWIMEGKDPDQMEALYRKKQKDKLREIRRKRKLQHAEPAASEEGKALLQDERFKSVDSARFEKKGKGRSRATQEDTPTKPLKRLNKEKPVAQKGRADVKKDKA.

Residues 7–35 (NPFQILGLRPWLVKQLTKLGLKGATPIQQ) carry the Q motif motif. The region spanning 38-209 (IPAILAGQDC…IFPIASDCFE (172 aa)) is the Helicase ATP-binding domain. 51 to 58 (AKTGSGKT) contributes to the ATP binding site. A DEAD box motif is present at residues 157–160 (DEAD). Positions 237–386 (VLIEALRKYR…EHPIDQRMVE (150 aa)) constitute a Helicase C-terminal domain. The disordered stretch occupies residues 448 to 521 (KRKLQHAEPA…GRADVKKDKA (74 aa)). 2 stretches are compositionally biased toward basic and acidic residues: residues 460 to 482 (EEGK…FEKK) and 502 to 521 (LNKE…KDKA).

This sequence belongs to the DEAD box helicase family. DDX49/DBP8 subfamily.

It catalyses the reaction ATP + H2O = ADP + phosphate + H(+). In terms of biological role, probable ATP-binding RNA helicase. The polypeptide is Probable ATP-dependent RNA helicase Dbp45A (Dbp45A) (Drosophila melanogaster (Fruit fly)).